Reading from the N-terminus, the 358-residue chain is MKMLQGVRAFQKLKKSCAYSTAAKELKPLPVKETVNMAYDLHLPERSVIGKMPYHSPEPIVFIHGLFGWKRFYRNDCKTLATALQTPVYAVDMRNHGDTEHAMPFDYNTLMDDLVLLLRKLDIKKVNLIGYSMGGKMSMLTALNYPELVSSACIIDNAPINQPHISPFLKVFSKSCQHVENMKIRATDKEWRSKVAVGLKRYIPNPGIRSYLLQNVSGTPPKKYRSPVIDWNDGNVHFVNPVNHLFQCVVKDASAWPVEQVAGKQFLGPVNFIRGTKSEFVNADGEKAIAEYFPYHKIQSINTTHNVLHERPQEYLRSVIDFFKTTRYVLERKRDSERVTMIAKPKPLTSSQNAAEYS.

Residues P59 to S166 form the AB hydrolase-1 domain. Catalysis depends on charge relay system residues S132, D156, and H305.

This sequence belongs to the AB hydrolase superfamily.

Its subcellular location is the mitochondrion. The catalysed reaction is ethanol + acetyl-CoA = ethyl acetate + CoA. It carries out the reaction acetyl-CoA + H2O = acetate + CoA + H(+). It catalyses the reaction ethyl acetate + H2O = ethanol + acetate + H(+). Functionally, alcohol acetyltransferase that catalyzes the synthesis of ethyl acetate from ethanol and acetyl-CoA. Can also function as a thioesterase by hydrolyzing acetyl-CoA in the absence of ethanol, as well as esterase hydrolyzing ethyl acetate. This Eremothecium cymbalariae (strain CBS 270.75 / DBVPG 7215 / KCTC 17166 / NRRL Y-17582) (Yeast) protein is Ethanol acetyltransferase 1 (EAT1).